The chain runs to 194 residues: Probable proteasome subunit beta type-4 (194 aa).

Belongs to the peptidase T1B family. As to quaternary structure, the 26S proteasome consists of a 20S proteasome core and two 19S regulatory subunits. The 20S proteasome core is composed of 28 subunits that are arranged in four stacked rings, resulting in a barrel-shaped structure. The two end rings are each formed by seven alpha subunits, and the two central rings are each formed by seven beta subunits. The catalytic chamber with the active sites is on the inside of the barrel.

The protein resides in the cytoplasm. It localises to the nucleus. Functionally, non-catalytic component of the proteasome, a multicatalytic proteinase complex which is characterized by its ability to cleave peptides with Arg, Phe, Tyr, Leu, and Glu adjacent to the leaving group at neutral or slightly basic pH. The proteasome has an ATP-dependent proteolytic activity. The protein is Probable proteasome subunit beta type-4 of Schizosaccharomyces pombe (strain 972 / ATCC 24843) (Fission yeast).